Here is a 221-residue protein sequence, read N- to C-terminus: Flagellar L-ring protein 1 (221 aa).

The N-terminal stretch at 1-16 (MKRFLILTPMVLALCG) is a signal peptide. Cys17 is lipidated: N-palmitoyl cysteine. Cys17 carries the S-diacylglycerol cysteine lipid modification.

This sequence belongs to the FlgH family. In terms of assembly, the basal body constitutes a major portion of the flagellar organelle and consists of four rings (L,P,S, and M) mounted on a central rod.

The protein resides in the cell outer membrane. It localises to the bacterial flagellum basal body. In terms of biological role, assembles around the rod to form the L-ring and probably protects the motor/basal body from shearing forces during rotation. In Yersinia pestis, this protein is Flagellar L-ring protein 1.